Here is a 291-residue protein sequence, read N- to C-terminus: Mitochondrial citrate transporter B (291 aa).

Solcar repeat units lie at residues 10–97 (PQKW…IKNS), 105–193 (LSPA…LKES), and 201–283 (PTLF…MTYL). Transmembrane regions (helical) follow at residues 16–36 (LIAGGVAGGVEAASTYPFEYA), 74–94 (STLIIGTTAKAAVRFVSYDTI), 112–132 (VAGVVAGATESVLAVTPTERI), 172–192 (TTLKQSATSAVRMGTYNILKE), 203–220 (LFTTFCMGALAGVVTVYA), and 255–276 (FWKGSSMRLGRLLLSGGIVFSV).

This sequence belongs to the mitochondrial carrier (TC 2.A.29) family.

It is found in the mitochondrion inner membrane. It carries out the reaction citrate(in) + H(+)(in) = citrate(out) + H(+)(out). Its function is as follows. Mitochondrial transporter that mediates citrate export from mitochondria to cytoplasm. Both ctpA, ctpB, and ctpD play important roles in citric acid transport across the mitochondrial membrane and function in a redundant manner. This is Mitochondrial citrate transporter B from Aspergillus niger (strain ATCC 1015 / CBS 113.46 / FGSC A1144 / LSHB Ac4 / NCTC 3858a / NRRL 328 / USDA 3528.7).